A 378-amino-acid chain; its full sequence is Lipoyl synthase, mitochondrial (378 aa).

[4Fe-4S] cluster is bound by residues cysteine 109, cysteine 114, cysteine 120, cysteine 140, cysteine 144, cysteine 147, and serine 356. The 221-residue stretch at 125–345 (ETGTATATIM…QTLGMEMGFR (221 aa)) folds into the Radical SAM core domain.

The protein belongs to the radical SAM superfamily. Lipoyl synthase family. [4Fe-4S] cluster is required as a cofactor.

The protein localises to the mitochondrion. It carries out the reaction [[Fe-S] cluster scaffold protein carrying a second [4Fe-4S](2+) cluster] + N(6)-octanoyl-L-lysyl-[protein] + 2 oxidized [2Fe-2S]-[ferredoxin] + 2 S-adenosyl-L-methionine + 4 H(+) = [[Fe-S] cluster scaffold protein] + N(6)-[(R)-dihydrolipoyl]-L-lysyl-[protein] + 4 Fe(3+) + 2 hydrogen sulfide + 2 5'-deoxyadenosine + 2 L-methionine + 2 reduced [2Fe-2S]-[ferredoxin]. Its pathway is protein modification; protein lipoylation via endogenous pathway; protein N(6)-(lipoyl)lysine from octanoyl-[acyl-carrier-protein]: step 2/2. Catalyzes the radical-mediated insertion of two sulfur atoms into the C-6 and C-8 positions of the octanoyl moiety bound to the lipoyl domains of lipoate-dependent enzymes, thereby converting the octanoylated domains into lipoylated derivatives. This Medicago truncatula (Barrel medic) protein is Lipoyl synthase, mitochondrial.